A 228-amino-acid chain; its full sequence is Archaeal flagellar ATP-binding protein FlaH (228 aa).

The ATP site is built by G30, T31, K33, S34, V35, E57, and K191. S34 is a Mg(2+) binding site. E57 provides a ligand contact to Mg(2+).

It belongs to the FlaH family. The S.acidocaldarius archaellum assembly machinery and its filament consist of seven proteins (FlaB, FlaF, FlaG, FlaH, FlaI, FlaJ and FlaX). Interacts directly with the FlaX ring and the motor ATPase FlaI. Monomers, which can probably form homohexamers upon binding to ATP. In vitro, FlaH assembles as a second ring inside the FlaX ring.

Its subcellular location is the archaeal flagellum. The protein resides in the cytoplasm. In terms of biological role, component of the archaellum. FlaX, FlaH and FlaI form the core cytoplasmic motor complex of the crenarchaeal archaellum. FlaH binds ATP with high affinity but lacks detectable in vitro ATPase activity. ATP binding is essential for interaction with FlaI and for archaellum assembly. This is Archaeal flagellar ATP-binding protein FlaH from Sulfolobus acidocaldarius (strain ATCC 33909 / DSM 639 / JCM 8929 / NBRC 15157 / NCIMB 11770).